The sequence spans 192 residues: uncharacterized protein (192 aa).

A Nudix hydrolase domain is found at 29 to 160 (HRQAAVLIPI…PLDIYRRGDS (132 aa)). The Nudix box motif lies at 67 to 89 (GAVDDTDTSVIAAALREAEEEVA). Mg(2+) contacts are provided by glutamate 83 and glutamate 87.

This sequence belongs to the Nudix hydrolase family. PCD1 subfamily. Mn(2+) is required as a cofactor. Requires Mg(2+) as cofactor.

Its function is as follows. Probably mediates the hydrolysis of some nucleoside diphosphate derivatives. This is an uncharacterized protein from Escherichia coli O6:H1 (strain CFT073 / ATCC 700928 / UPEC).